We begin with the raw amino-acid sequence, 151 residues long: MKLILTADVDNLGAPGDTVEVKDGYGRNYLLPRGLAIVATRGAEKQVEGIRRAQEARAVRGLDHAKELKDAIEGLESISLTVKTAGDSGKLFGSVTAADVAAAIKAAGGPVVDKRSLELPKAHIKATGKHAIVVNLHPDVVAKFHLNVVGA.

Belongs to the bacterial ribosomal protein bL9 family.

Binds to the 23S rRNA. In Rhodococcus opacus (strain B4), this protein is Large ribosomal subunit protein bL9.